The following is a 481-amino-acid chain: Anti-sigma-I factor RsgI5 (481 aa).

Residues 1 to 50 lie on the Cytoplasmic side of the membrane; the sequence is MKHKGIVLKLTKSKAIISTNDFQCYYIKRSPTIYVGKEVEFTNKDIVTKK. One can recognise a RsgI N-terminal anti-sigma domain in the interval 3–50; sequence HKGIVLKLTKSKAIISTNDFQCYYIKRSPTIYVGKEVEFTNKDIVTKK. The chain crosses the membrane as a helical span at residues 51 to 71; that stretch reads SVLIKPALSVACFILLIACVL. Topologically, residues 72–481 are extracellular; it reads SLSKIINNIS…DATFIGIKVD (410 aa). A disordered region spans residues 255–339; sequence ASEERNPEES…TPTPTPTPAD (85 aa). A compositionally biased stretch (basic and acidic residues) spans 256–265; the sequence is SEERNPEESP. Composition is skewed to low complexity over residues 266–283 and 291–315; these read KMTPTPTPTHTATHTPTD and NTPTSTPAAKPSPKTASNSASTSTP. Pro residues predominate over residues 316–336; that stretch reads APKPTSTPTPTLMPTPTPTPT.

As to quaternary structure, interacts (via RsgI N-terminal anti-sigma domain) with SigI5.

The protein resides in the cell membrane. In terms of biological role, anti-sigma factor for SigI5. Negatively regulates SigI5 activity through direct interaction. Binding of the polysaccharide substrate to the extracellular C-terminal sensing domain of RsgI5 may induce a conformational change in its N-terminal cytoplasmic region, leading to the release and activation of SigI5. This Acetivibrio thermocellus (strain ATCC 27405 / DSM 1237 / JCM 9322 / NBRC 103400 / NCIMB 10682 / NRRL B-4536 / VPI 7372) (Clostridium thermocellum) protein is Anti-sigma-I factor RsgI5.